A 322-amino-acid chain; its full sequence is Thioredoxin reductase (322 aa).

Residues 11–14 (SGPA), 40–41 (IA), Q45, N54, V87, and C145 each bind FAD. C142 and C145 form a disulfide bridge. At S192 the chain carries Phosphoserine. A Phosphothreonine modification is found at T278. Residue S279 is modified to Phosphoserine. FAD-binding positions include D288 and 295-297 (RQA).

It belongs to the class-II pyridine nucleotide-disulfide oxidoreductase family. As to quaternary structure, homodimer. The cofactor is FAD.

Its subcellular location is the cytoplasm. The enzyme catalyses [thioredoxin]-dithiol + NADP(+) = [thioredoxin]-disulfide + NADPH + H(+). In Schizosaccharomyces pombe (strain 972 / ATCC 24843) (Fission yeast), this protein is Thioredoxin reductase (trr1).